Here is a 233-residue protein sequence, read N- to C-terminus: Ribose-5-phosphate isomerase A (233 aa).

Substrate-binding positions include 31–34, 87–90, and 100–103; these read SGST, DGAD, and KGGG. Residue Glu-109 is the Proton acceptor of the active site. Residue Lys-127 participates in substrate binding.

It belongs to the ribose 5-phosphate isomerase family. As to quaternary structure, homodimer.

The enzyme catalyses aldehydo-D-ribose 5-phosphate = D-ribulose 5-phosphate. It participates in carbohydrate degradation; pentose phosphate pathway; D-ribose 5-phosphate from D-ribulose 5-phosphate (non-oxidative stage): step 1/1. In terms of biological role, catalyzes the reversible conversion of ribose-5-phosphate to ribulose 5-phosphate. The sequence is that of Ribose-5-phosphate isomerase A from Chlamydia felis (strain Fe/C-56) (Chlamydophila felis).